Here is a 667-residue protein sequence, read N- to C-terminus: Heat shock protein DDB_G0283913 (667 aa).

The next 2 membrane-spanning stretches (helical) occupy residues 2-22 (FVGTLVIIICTTLIIIIKKIL) and 224-244 (MFICDMSFSLASIIVYVLNEL). A coiled-coil region spans residues 18–82 (IKKILKRKKE…ELAKKLNCYI (65 aa)). Residues 432 to 478 (IDDTIQDNDKSGSEVSTPTISSSSSSPLQPIIKDEKDDNIENKSDEA) form a disordered region. The segment covering 444-457 (SEVSTPTISSSSSS) has biased composition (low complexity). Over residues 463–477 (IKDEKDDNIENKSDE) the composition is skewed to basic and acidic residues. Residues 551–667 (MVFSSGFKPF…VITFKFEKIG (117 aa)) enclose the sHSP domain.

This sequence belongs to the small heat shock protein (HSP20) family.

It is found in the membrane. This Dictyostelium discoideum (Social amoeba) protein is Heat shock protein DDB_G0283913.